The sequence spans 777 residues: Phosphate transporter PHO1 homolog 10 (777 aa).

In terms of domain architecture, SPX spans 1-322 (MKFGKIFKKQ…SRNASRNYMK (322 aa)). The Cytoplasmic portion of the chain corresponds to 1–372 (MKFGKIFKKQ…RPKVKRERHR (372 aa)). The helical transmembrane segment at 373-393 (VTFFSGFFSGCSIALVIAVVF) threads the bilayer. The Extracellular portion of the chain corresponds to 394–408 (KIESRKIMEKNYGTE). Residues 409–429 (YMANIIPLYSLFGFIILHMLM) form a helical membrane-spanning segment. Over 430–459 (YSANIYFWKRYRVNYTFIFGFKQGTELGDR) the chain is Cytoplasmic. A helical membrane pass occupies residues 460-480 (EVFLVSTGLAVLAFVCFLLNL). The Extracellular segment spans residues 481–496 (QLDMDWRMKHHKTLPE). Residues 497-517 (VIPLCLATIVLFILFCPFNII) form a helical membrane-spanning segment. Over 518–646 (YRSSRFFFIR…YELKKGRTWM (129 aa)) the chain is Cytoplasmic. Residues 581-775 (HSHGVYNAFY…HYYDDDDVDK (195 aa)) enclose the EXS domain. The chain crosses the membrane as a helical span at residues 647-667 (ILALVSSGVATGMNTFWDIVI). Residues 668 to 691 (DWGLLRKHSKNPYLRDKLLVPHKS) are Extracellular-facing. A helical transmembrane segment spans residues 692-712 (VYFAAMVVNVILRVAWMQLVL). The Cytoplasmic portion of the chain corresponds to 713-777 (EFNLKSLHKI…YDDDDVDKDD (65 aa)).

Belongs to the SYG1 (TC 2.A.94) family. In terms of tissue distribution, expressed in root epidermis and cortex, leaf blades and hydathodes, stems and flowers.

Its subcellular location is the cell membrane. Functionally, may transport inorganic phosphate (Pi). The sequence is that of Phosphate transporter PHO1 homolog 10 (PHO1-H10) from Arabidopsis thaliana (Mouse-ear cress).